The chain runs to 34 residues: Photosystem II reaction center protein M (34 aa).

The chain crosses the membrane as a helical span at residues Gly-7–Ile-27.

This sequence belongs to the PsbM family. As to quaternary structure, PSII is composed of 1 copy each of membrane proteins PsbA, PsbB, PsbC, PsbD, PsbE, PsbF, PsbH, PsbI, PsbJ, PsbK, PsbL, PsbM, PsbT, PsbX, PsbY, Psb30/Ycf12, peripheral proteins PsbO, CyanoQ (PsbQ), PsbU, PsbV and a large number of cofactors. It forms dimeric complexes.

The protein resides in the cellular thylakoid membrane. One of the components of the core complex of photosystem II (PSII). PSII is a light-driven water:plastoquinone oxidoreductase that uses light energy to abstract electrons from H(2)O, generating O(2) and a proton gradient subsequently used for ATP formation. It consists of a core antenna complex that captures photons, and an electron transfer chain that converts photonic excitation into a charge separation. This subunit is found at the monomer-monomer interface. The polypeptide is Photosystem II reaction center protein M (Prochlorococcus marinus (strain MIT 9303)).